Here is a 343-residue protein sequence, read N- to C-terminus: Ferrochelatase (343 aa).

H211 and E292 together coordinate Fe cation.

Belongs to the ferrochelatase family.

The protein resides in the cytoplasm. It catalyses the reaction heme b + 2 H(+) = protoporphyrin IX + Fe(2+). It functions in the pathway porphyrin-containing compound metabolism; protoheme biosynthesis; protoheme from protoporphyrin-IX: step 1/1. Catalyzes the ferrous insertion into protoporphyrin IX. The sequence is that of Ferrochelatase from Gluconobacter oxydans (strain 621H) (Gluconobacter suboxydans).